The following is a 95-amino-acid chain: Large ribosomal subunit protein uL23 (95 aa).

Belongs to the universal ribosomal protein uL23 family. As to quaternary structure, part of the 50S ribosomal subunit. Contacts protein L29, and trigger factor when it is bound to the ribosome.

Its function is as follows. One of the early assembly proteins it binds 23S rRNA. One of the proteins that surrounds the polypeptide exit tunnel on the outside of the ribosome. Forms the main docking site for trigger factor binding to the ribosome. This is Large ribosomal subunit protein uL23 from Bacillus subtilis (strain 168).